A 688-amino-acid polypeptide reads, in one-letter code: Glycine--tRNA ligase beta subunit (688 aa).

The protein belongs to the class-II aminoacyl-tRNA synthetase family. In terms of assembly, tetramer of two alpha and two beta subunits.

The protein localises to the cytoplasm. It catalyses the reaction tRNA(Gly) + glycine + ATP = glycyl-tRNA(Gly) + AMP + diphosphate. This is Glycine--tRNA ligase beta subunit from Actinobacillus pleuropneumoniae serotype 7 (strain AP76).